The sequence spans 363 residues: UDP-N-acetylglucosamine--N-acetylmuramyl-(pentapeptide) pyrophosphoryl-undecaprenol N-acetylglucosamine transferase (363 aa).

Residues 7–9 (TGG), asparagine 125, serine 196, isoleucine 251, and glutamine 296 contribute to the UDP-N-acetyl-alpha-D-glucosamine site.

Belongs to the glycosyltransferase 28 family. MurG subfamily.

It is found in the cell membrane. The catalysed reaction is Mur2Ac(oyl-L-Ala-gamma-D-Glu-L-Lys-D-Ala-D-Ala)-di-trans,octa-cis-undecaprenyl diphosphate + UDP-N-acetyl-alpha-D-glucosamine = beta-D-GlcNAc-(1-&gt;4)-Mur2Ac(oyl-L-Ala-gamma-D-Glu-L-Lys-D-Ala-D-Ala)-di-trans,octa-cis-undecaprenyl diphosphate + UDP + H(+). Its pathway is cell wall biogenesis; peptidoglycan biosynthesis. Cell wall formation. Catalyzes the transfer of a GlcNAc subunit on undecaprenyl-pyrophosphoryl-MurNAc-pentapeptide (lipid intermediate I) to form undecaprenyl-pyrophosphoryl-MurNAc-(pentapeptide)GlcNAc (lipid intermediate II). The polypeptide is UDP-N-acetylglucosamine--N-acetylmuramyl-(pentapeptide) pyrophosphoryl-undecaprenol N-acetylglucosamine transferase (Latilactobacillus sakei subsp. sakei (strain 23K) (Lactobacillus sakei subsp. sakei)).